The following is a 506-amino-acid chain: Vinckepain-1 (506 aa).

At 1-32 (MSDNIGQINFTIPGIQSLDENDTYLKINHKKT) the chain is on the cytoplasmic side. Positions 1–262 (MSDNIGQINF…LISVDNKSKD (262 aa)) are cleaved as a propeptide — activation peptide. Residues 33–53 (IKICAYAITAIALFFIGGVFF) traverse the membrane as a helical; Signal-anchor for type II membrane protein segment. Residues 54 to 506 (KNQAKINALD…VGSDVFFPIY (453 aa)) lie on the Lumenal side of the membrane. N133 and N258 each carry an N-linked (GlcNAc...) asparagine glycan. 4 disulfides stabilise this stretch: C284/C326, C319/C359, C344/C364, and C413/C495. C287 is an active-site residue. N-linked (GlcNAc...) asparagine glycosylation occurs at N418. Residues H419 and N470 contribute to the active site.

The protein belongs to the peptidase C1 family.

The protein localises to the membrane. Its function is as follows. Cysteine protease. The chain is Vinckepain-1 from Plasmodium vinckei.